Here is a 208-residue protein sequence, read N- to C-terminus: ATP-dependent Clp protease proteolytic subunit (208 aa).

S106 functions as the Nucleophile in the catalytic mechanism. H131 is a catalytic residue.

The protein belongs to the peptidase S14 family. In terms of assembly, fourteen ClpP subunits assemble into 2 heptameric rings which stack back to back to give a disk-like structure with a central cavity, resembling the structure of eukaryotic proteasomes.

The protein resides in the cytoplasm. The catalysed reaction is Hydrolysis of proteins to small peptides in the presence of ATP and magnesium. alpha-casein is the usual test substrate. In the absence of ATP, only oligopeptides shorter than five residues are hydrolyzed (such as succinyl-Leu-Tyr-|-NHMec, and Leu-Tyr-Leu-|-Tyr-Trp, in which cleavage of the -Tyr-|-Leu- and -Tyr-|-Trp bonds also occurs).. Functionally, cleaves peptides in various proteins in a process that requires ATP hydrolysis. Has a chymotrypsin-like activity. Plays a major role in the degradation of misfolded proteins. The sequence is that of ATP-dependent Clp protease proteolytic subunit from Roseobacter denitrificans (strain ATCC 33942 / OCh 114) (Erythrobacter sp. (strain OCh 114)).